Here is a 100-residue protein sequence, read N- to C-terminus: Integration host factor subunit alpha (100 aa).

The tract at residues 53-72 (FDLRDKRQRPGRNPKTGEEI) is disordered.

This sequence belongs to the bacterial histone-like protein family. In terms of assembly, heterodimer of an alpha and a beta chain.

In terms of biological role, this protein is one of the two subunits of integration host factor, a specific DNA-binding protein that functions in genetic recombination as well as in transcriptional and translational control. The chain is Integration host factor subunit alpha from Stutzerimonas stutzeri (strain A1501) (Pseudomonas stutzeri).